We begin with the raw amino-acid sequence, 439 residues long: MNLTPKEIVKFLDDYVIGQKKAKKIIAIALRNRYRRMQLSPELQDDIVPKNILMIGSTGVGKTEIARRLAKMMGFPFIKIEASKYTEVGFVGRDVESMVRDLANAALNLVKNEQREKNKDKIDEFIENKILEKLLPPLPKGISDEKQEEYKNSLEKMRTKLRNGDLDESTIEIEISQNMFDTNPNLPPEMGAMQDIVKVIGVGSKKVKKEMKIKDAKNALKNEAGEKILDQESIKSEALKRAENEGIIFIDEIDKIAVSSGNSNRQDPSKEGVQRDLLPIVEGSNIQTKIGTLKTDHILFIAAGAFHLSKPSDLIPELQGRFPLRVELDSLDDKALYEILTRPKNSLLKQYSQLLKTENLELEFDDEAIKEIAKIASRANEEMQDIGARRLHTVIEKLLEDLSFEADEYAGKKFVVDKKMVEEKLGDIIENKDLARYIL.

Residues Ile17, 59–64 (GVGKTE), Asp251, Glu317, and Arg389 contribute to the ATP site.

The protein belongs to the ClpX chaperone family. HslU subfamily. In terms of assembly, a double ring-shaped homohexamer of HslV is capped on each side by a ring-shaped HslU homohexamer. The assembly of the HslU/HslV complex is dependent on binding of ATP.

The protein resides in the cytoplasm. Functionally, ATPase subunit of a proteasome-like degradation complex; this subunit has chaperone activity. The binding of ATP and its subsequent hydrolysis by HslU are essential for unfolding of protein substrates subsequently hydrolyzed by HslV. HslU recognizes the N-terminal part of its protein substrates and unfolds these before they are guided to HslV for hydrolysis. This chain is ATP-dependent protease ATPase subunit HslU, found in Campylobacter jejuni subsp. jejuni serotype O:6 (strain 81116 / NCTC 11828).